A 285-amino-acid polypeptide reads, in one-letter code: 2-dehydro-3-deoxyphosphooctonate aldolase (285 aa).

This sequence belongs to the KdsA family.

The protein resides in the cytoplasm. The catalysed reaction is D-arabinose 5-phosphate + phosphoenolpyruvate + H2O = 3-deoxy-alpha-D-manno-2-octulosonate-8-phosphate + phosphate. It participates in carbohydrate biosynthesis; 3-deoxy-D-manno-octulosonate biosynthesis; 3-deoxy-D-manno-octulosonate from D-ribulose 5-phosphate: step 2/3. It functions in the pathway bacterial outer membrane biogenesis; lipopolysaccharide biosynthesis. The protein is 2-dehydro-3-deoxyphosphooctonate aldolase of Albidiferax ferrireducens (strain ATCC BAA-621 / DSM 15236 / T118) (Rhodoferax ferrireducens).